The following is a 570-amino-acid chain: Interleukin-1 receptor accessory protein (570 aa).

The N-terminal stretch at 1 to 20 is a signal peptide; it reads MGLPWCLMSLFFCGILQSHA. Ig-like C2-type domains lie at 21-128, 141-230, and 243-348; these read SERC…VAFP, PMRL…RTMT, and PHIY…AKVK. Residues 21-367 lie on the Extracellular side of the membrane; the sequence is SERCDDWGLD…VELACGFGAT (347 aa). 5 disulfide bridges follow: Cys-24-Cys-122, Cys-47-Cys-114, Cys-137-Cys-181, Cys-160-Cys-212, and Cys-266-Cys-332. Asn-57 carries N-linked (GlcNAc...) asparagine glycosylation. Residues 69 to 85 form an essential for interaction with PTPRD region; that stretch reads IWYWTRQDRDLEEPINF. 6 N-linked (GlcNAc...) asparagine glycosylation sites follow: Asn-107, Asn-111, Asn-118, Asn-157, Asn-196, and Asn-209. The helical transmembrane segment at 368–388 threads the bilayer; that stretch reads VFLVVVLIVVYHVYWLEMVLF. Residues 389–570 lie on the Cytoplasmic side of the membrane; it reads YRAHFGTDET…GLSYSSLKNV (182 aa). Residues 403 to 546 enclose the TIR domain; it reads KEYDIYVSYA…RFWKQLQVAM (144 aa). Glu-482 is a catalytic residue. The disordered stretch occupies residues 550–570; that stretch reads KSPRWSSSDKQGLSYSSLKNV. Residues 553-570 are compositionally biased toward polar residues; that stretch reads RWSSSDKQGLSYSSLKNV. Ser-557 bears the Phosphoserine mark.

Belongs to the interleukin-1 receptor family. As to quaternary structure, the interleukin-36 receptor complex is a heterodimer of IL1RL2 and IL1RAP; the association is inhibited by IL36RN. The interleukin-1 receptor complex is a heterodimer of IL1R1 and IL1RAP. Associates with IL1R2 to form a non-signaling interleukin-1 receptor complex. Interacts with IL-33-bound IL1RL1 to form the minimal interleukin-33 signaling complex with a 1:1:1 stoichiometry. Interacts with KIT (independently of stimulation with KITLG/SCF). A mast cell-specific KITLG/SCF-induced interleukin-33 signaling complex contains IL1RL1, IL1RAP, KIT and MYD88. Interacts (via the first immunoglobilin domain) with PTPRD (via the third immunoglobilin domain); induces pre- and postsynaptic differentiation of neurons. As to expression, highly expressed in hypothalamus, in the dentate gyrus of hippocampus, cerebral cortex, cerebellum, liver and lung.

Its subcellular location is the membrane. It carries out the reaction NAD(+) + H2O = ADP-D-ribose + nicotinamide + H(+). Coreceptor for IL1RL2 in the IL-36 signaling system. Coreceptor with IL1R1 in the IL-1 signaling system. Associates with IL1R1 bound to IL1B to form the high affinity interleukin-1 receptor complex which mediates interleukin-1-dependent activation of NF-kappa-B and other pathways. Signaling involves the recruitment of adapter molecules such as TOLLIP, MYD88, and IRAK1 or IRAK2 via the respective TIR domains of the receptor/coreceptor subunits. Recruits TOLLIP to the signaling complex. Does not bind to interleukin-1 alone; binding of IL1RN to IL1R1, prevents its association with IL1R1 to form a signaling complex. The cellular response is modulated through a non-signaling association with the membrane IL1R2 decoy receptor. Coreceptor for IL1RL1 in the IL-33 signaling system. Can bidirectionally induce pre- and postsynaptic differentiation of neurons by trans-synaptically binding to PTPRD. May play a role in IL1B-mediated costimulation of IFNG production from T-helper 1 (Th1) cells. This Rattus norvegicus (Rat) protein is Interleukin-1 receptor accessory protein (Il1rap).